The primary structure comprises 172 residues: Adenine phosphoribosyltransferase (172 aa).

The protein belongs to the purine/pyrimidine phosphoribosyltransferase family. Homodimer.

The protein localises to the cytoplasm. The catalysed reaction is AMP + diphosphate = 5-phospho-alpha-D-ribose 1-diphosphate + adenine. It participates in purine metabolism; AMP biosynthesis via salvage pathway; AMP from adenine: step 1/1. Its function is as follows. Catalyzes a salvage reaction resulting in the formation of AMP, that is energically less costly than de novo synthesis. The protein is Adenine phosphoribosyltransferase of Prochlorococcus marinus (strain MIT 9215).